A 92-amino-acid chain; its full sequence is uncharacterized protein (92 aa).

Transmembrane regions (helical) follow at residues 34 to 54 (GLGI…FMFG) and 65 to 85 (LLYI…ASTV).

It localises to the cell membrane. This is an uncharacterized protein from Bacillus anthracis.